The sequence spans 273 residues: 4-hydroxy-tetrahydrodipicolinate reductase (273 aa).

Residues 12 to 17 (GAGGRM) and E38 contribute to the NAD(+) site. R39 contacts NADP(+). Residues 102 to 104 (GTT) and 126 to 129 (AANF) contribute to the NAD(+) site. H159 (proton donor/acceptor) is an active-site residue. H160 is a binding site for (S)-2,3,4,5-tetrahydrodipicolinate. Residue K163 is the Proton donor of the active site. 169–170 (GT) provides a ligand contact to (S)-2,3,4,5-tetrahydrodipicolinate.

Belongs to the DapB family. Homotetramer.

The protein localises to the cytoplasm. The catalysed reaction is (S)-2,3,4,5-tetrahydrodipicolinate + NAD(+) + H2O = (2S,4S)-4-hydroxy-2,3,4,5-tetrahydrodipicolinate + NADH + H(+). It catalyses the reaction (S)-2,3,4,5-tetrahydrodipicolinate + NADP(+) + H2O = (2S,4S)-4-hydroxy-2,3,4,5-tetrahydrodipicolinate + NADPH + H(+). It participates in amino-acid biosynthesis; L-lysine biosynthesis via DAP pathway; (S)-tetrahydrodipicolinate from L-aspartate: step 4/4. In terms of biological role, catalyzes the conversion of 4-hydroxy-tetrahydrodipicolinate (HTPA) to tetrahydrodipicolinate. This is 4-hydroxy-tetrahydrodipicolinate reductase from Escherichia coli O139:H28 (strain E24377A / ETEC).